We begin with the raw amino-acid sequence, 571 residues long: Proline--tRNA ligase (571 aa).

This sequence belongs to the class-II aminoacyl-tRNA synthetase family. ProS type 1 subfamily. In terms of assembly, homodimer.

The protein resides in the cytoplasm. It catalyses the reaction tRNA(Pro) + L-proline + ATP = L-prolyl-tRNA(Pro) + AMP + diphosphate. In terms of biological role, catalyzes the attachment of proline to tRNA(Pro) in a two-step reaction: proline is first activated by ATP to form Pro-AMP and then transferred to the acceptor end of tRNA(Pro). As ProRS can inadvertently accommodate and process non-cognate amino acids such as alanine and cysteine, to avoid such errors it has two additional distinct editing activities against alanine. One activity is designated as 'pretransfer' editing and involves the tRNA(Pro)-independent hydrolysis of activated Ala-AMP. The other activity is designated 'posttransfer' editing and involves deacylation of mischarged Ala-tRNA(Pro). The misacylated Cys-tRNA(Pro) is not edited by ProRS. This chain is Proline--tRNA ligase, found in Pseudomonas syringae pv. tomato (strain ATCC BAA-871 / DC3000).